A 194-amino-acid chain; its full sequence is Early growth response protein 1 (194 aa).

3 consecutive C2H2-type zinc fingers follow at residues 1–18, 24–46, and 52–74; these read CDRR…IRIH, FQCR…IRTH, and FACD…TKIH.

This sequence belongs to the EGR C2H2-type zinc-finger protein family.

The protein localises to the nucleus. It is found in the cytoplasm. Transcriptional regulator. Recognizes and binds to the DNA sequence 5'-GCG(T/G)GGGCG-3'(EGR-site) in the promoter region of target genes. Binds double-stranded target DNA, irrespective of the cytosine methylation status. Regulates the transcription of numerous target genes, and thereby plays an important role in regulating the response to growth factors, DNA damage, and ischemia. Plays a role in the regulation of cell survival, proliferation and cell death. Mediates responses to ischemia and hypoxia; regulates the expression of proteins that are involved in inflammatory processes. Plays a role in regulating the expression of circadian clock genes. This chain is Early growth response protein 1 (EGR1), found in Gallus gallus (Chicken).